The primary structure comprises 438 residues: Serine hydroxymethyltransferase (438 aa).

(6S)-5,6,7,8-tetrahydrofolate is bound by residues leucine 133 and 137–139 (GHL). Lysine 242 carries the post-translational modification N6-(pyridoxal phosphate)lysine.

This sequence belongs to the SHMT family. In terms of assembly, homodimer. It depends on pyridoxal 5'-phosphate as a cofactor.

It is found in the cytoplasm. The enzyme catalyses (6R)-5,10-methylene-5,6,7,8-tetrahydrofolate + glycine + H2O = (6S)-5,6,7,8-tetrahydrofolate + L-serine. It functions in the pathway one-carbon metabolism; tetrahydrofolate interconversion. The protein operates within amino-acid biosynthesis; glycine biosynthesis; glycine from L-serine: step 1/1. Catalyzes the reversible interconversion of serine and glycine with tetrahydrofolate (THF) serving as the one-carbon carrier. This reaction serves as the major source of one-carbon groups required for the biosynthesis of purines, thymidylate, methionine, and other important biomolecules. Also exhibits THF-independent aldolase activity toward beta-hydroxyamino acids, producing glycine and aldehydes, via a retro-aldol mechanism. This Brucella suis (strain ATCC 23445 / NCTC 10510) protein is Serine hydroxymethyltransferase.